A 235-amino-acid polypeptide reads, in one-letter code: Calcium-activated potassium channel subunit beta-2 (235 aa).

The tract at residues 1–45 is ball and chain; the sequence is MFIWTSGRTSSSYRQDEKRNIYQKIRDHDLLDKRKTVTALKAGED. At 1–46 the chain is on the cytoplasmic side; that stretch reads MFIWTSGRTSSSYRQDEKRNIYQKIRDHDLLDKRKTVTALKAGEDR. A helical transmembrane segment spans residues 47–67; sequence AILLGLAMMVCSIMMYFLLGI. Topologically, residues 68 to 194 are extracellular; the sequence is TLLRSYMQSV…VILTKLYSSN (127 aa). N-linked (GlcNAc...) asparagine glycans are attached at residues asparagine 88, asparagine 96, and asparagine 119. A helical transmembrane segment spans residues 195–215; the sequence is VLFHSLFWPTCMMAGGVAIVA. Residues 216 to 235 are Cytoplasmic-facing; that stretch reads MVKLTQYLSLLCERIQRINR.

Belongs to the KCNMB (TC 8.A.14.1) family. KCNMB2 subfamily. Interacts with KCNMA1 tetramer. There are probably 4 molecules of KCMNB2 per KCNMA1 tetramer. N-glycosylated.

Its subcellular location is the membrane. In terms of biological role, regulatory subunit of the calcium activated potassium KCNMA1 (maxiK) channel. Modulates the calcium sensitivity and gating kinetics of KCNMA1, thereby contributing to KCNMA1 channel diversity. Acts as a negative regulator that confers rapid and complete inactivation of KCNMA1 channel complex. The protein is Calcium-activated potassium channel subunit beta-2 (Kcnmb2) of Mus musculus (Mouse).